A 272-amino-acid chain; its full sequence is MLNLNELKSGFHYFVMGWHFITQKGLRRFVIMPIVLNTVLLCGLFWLFISQISSAIDWVMNFIPDWLSFLSVILLILSILTILLLFYFTFTTISGFIAAPFNGLLAEKVEKMLTGENINDDGLVDIMRDVPRMLAREWQKLRYSLPKIIALFLLSFIPLVGQTIVPVLTFLFTCWMMAIQYCDYPFDNHKVSFDIMKNVLGNQRTQSLTFGGLVTCCTFVPVINLLIMPVAVCGATLMWVENYRNDLGFNMNKSFSSQTGLDVRSENTGIVK.

4 helical membrane-spanning segments follow: residues 29-49 (FVIM…WLFI), 66-86 (WLSF…LLLF), 148-168 (IIAL…VPVL), and 219-239 (FVPV…TLMW).

It belongs to the CysZ family.

The protein resides in the cell inner membrane. In terms of biological role, high affinity, high specificity proton-dependent sulfate transporter, which mediates sulfate uptake. Provides the sulfur source for the cysteine synthesis pathway. This chain is Sulfate transporter CysZ, found in Haemophilus influenzae (strain ATCC 51907 / DSM 11121 / KW20 / Rd).